The primary structure comprises 737 residues: Ribosome-releasing factor 2, mitochondrial (737 aa).

The N-terminal 36 residues, 1–36, are a transit peptide targeting the mitochondrion; sequence MLCNRLHKAAFAARLRPRLPATVASCRQVHNSDGTI. The tr-type G domain occupies 39 to 318; sequence KRIRNIGILA…SVLNFLPAPS (280 aa). GTP is bound by residues 48–55, 112–116, and 166–169; these read AHIDAGKT, DTPGH, and NKMD.

This sequence belongs to the TRAFAC class translation factor GTPase superfamily. Classic translation factor GTPase family. EF-G/EF-2 subfamily.

The protein localises to the mitochondrion. Functionally, mitochondrial GTPase that mediates the disassembly of ribosomes from messenger RNA at the termination of mitochondrial protein biosynthesis. Not involved in the GTP-dependent ribosomal translocation step during translation elongation. This chain is Ribosome-releasing factor 2, mitochondrial, found in Anopheles gambiae (African malaria mosquito).